Reading from the N-terminus, the 7081-residue chain is Leucine-rich repeat transmembrane protein CCDC168 (7081 aa).

The chain crosses the membrane as a helical span at residues 37–57 (WVAIFFIILLGIIFEIILMKA). LRR repeat units lie at residues 233 to 256 (PCPL…VRNQ) and 420 to 445 (NAEF…SVKA). The segment at 717 to 745 (EDLQSSENSHLQLSNGEELPTSTPKTQRC) is disordered. The segment covering 718–742 (DLQSSENSHLQLSNGEELPTSTPKT) has biased composition (polar residues). The LRR 3 repeat unit spans residues 865-890 (ADTLRIIRLSHSASKQEKLPDEKETQ). The interval 943–1009 (QISSGSSKAP…DPKNPLTMPE (67 aa)) is disordered. Positions 958 to 970 (VQPQTLSTQTILE) are enriched in polar residues. Residues 981–999 (QVEKVKQSTDRPTDRESAG) show a composition bias toward basic and acidic residues. The LRR 4 repeat unit spans residues 1050–1075 (LPAVALGSFNNHLLTLPYFKRQEIKK). Polar residues-rich tracts occupy residues 1274–1286 (KCTA…SPIS) and 1295–1304 (LNQTRESYIP). The interval 1274–1304 (KCTADSETPSPISGKSLIGDPLNQTRESYIP) is disordered. Residues 1501–1527 (NCLTLELHINGQRLQHQTGFEQTTLET) form an LRR 5 repeat. Basic and acidic residues-rich tracts occupy residues 1773–1784 (ETEKDTLREKRL) and 1793–1804 (TSPHEDSITSRD). Disordered regions lie at residues 1773-1804 (ETEK…TSRD), 1954-1973 (KSPH…ESGS), 2008-2031 (STHQ…EGRS), and 2083-2103 (TGKS…NPRR). Positions 1964-1973 (ANLTDMESGS) are enriched in polar residues. An LRR 6 repeat occupies 2373–2397 (KNQINTIQLSERKIILNPKCLTMKE). The disordered stretch occupies residues 2637-2680 (GRHSPASEEMKRQNGRLKMADRSSPQGRPLQAKQSAVSQSPDTA). Positions 2668–2678 (AKQSAVSQSPD) are enriched in polar residues. 5 LRR repeats span residues 2727–2749 (SKIH…KTRA), 2832–2855 (IQQQ…VYDS), 2862–2889 (IKKL…KLEK), 3433–3458 (LSSR…RLEW), and 3630–3653 (ILSL…NVKS). Residues 3730–3756 (SLSHSNSNSRTKAGKDKSGTLKGCLPP) are disordered. An LRR 12 repeat occupies 3875–3898 (MRGITRFCLSSSTQQELSDTMEKC). Disordered regions lie at residues 4119 to 4260 (ELSH…DGDK), 4293 to 4428 (QGII…KQET), 4729 to 4756 (QESL…LLPQ), 4794 to 4817 (SPLS…QDRT), 4831 to 4859 (MPSL…RLAN), 4928 to 4955 (GVQE…YLNC), 4966 to 4985 (LGKT…SDSG), and 5191 to 5212 (QKVK…SPLH). 6 stretches are compositionally biased toward basic and acidic residues: residues 4121–4133 (SHQK…EKAD), 4147–4176 (KAKD…DKGL), 4192–4245 (EPGK…EQQK), 4329–4361 (QKAK…DLKG), 4375–4401 (EPGK…NRDG), and 4415–4426 (EQEKRDGHKSKQ). Over residues 4731–4743 (SLPSRQTAPTKPT) the composition is skewed to polar residues. Composition is skewed to basic and acidic residues over residues 4746–4756 (LVKKEKQLLPQ) and 4798–4817 (KRKE…QDRT). Over residues 5203–5212 (KSPSRSSPLH) the composition is skewed to polar residues. An LRR 13 repeat occupies 5311-5336 (LSQLELDKETHLGNEMLRLKRPILRR). A disordered region spans residues 5467–5496 (LPDTEKTADAEARSGDVRKGKPHRSQKENR). The segment covering 5469 to 5496 (DTEKTADAEARSGDVRKGKPHRSQKENR) has biased composition (basic and acidic residues). Residues 5522–5545 (LNAKELVLNINKLEKKVHKDKDEA) form an LRR 14 repeat. Disordered regions lie at residues 5564–5583 (LDSG…SSCP) and 5763–5792 (QQET…SNDR). The segment covering 5779–5792 (KFDKPKEDGQSNDR) has biased composition (basic and acidic residues). LRR repeat units follow at residues 5901 to 5924 (KQAL…LFPP), 6259 to 6282 (PDLR…ECPS), 6419 to 6442 (HLES…SLQM), 6552 to 6575 (HFSV…SYAM), and 6613 to 6637 (QIDL…TFPK). 2 disordered regions span residues 6859-6878 (CKSH…SPDW) and 6916-6950 (APLT…RSDL). The span at 6860-6871 (KSHKSRKYRSSS) shows a compositional bias: basic residues. Residues 6937–6950 (HPESQERKKARSDL) show a composition bias toward basic and acidic residues. The LRR 20 repeat unit spans residues 7012–7036 (NRPFFFACVPADSLEVIPKTIRWTI).

It localises to the membrane. The polypeptide is Leucine-rich repeat transmembrane protein CCDC168 (Homo sapiens (Human)).